An 89-amino-acid polypeptide reads, in one-letter code: cAMP-regulated phosphoprotein 21 (89 aa).

The tract at residues 1–89 is disordered; the sequence is MSEQGDLNQA…GGESLQDQTL (89 aa). Serine 2 bears the N-acetylserine mark. Residues 9 to 25 are compositionally biased toward low complexity; it reads QAIAEEGGTEQETATPE. Serine 33 bears the Phosphoserine mark. Basic and acidic residues predominate over residues 40-53; it reads LELQRRLEAQNQER. Serine 56 carries the phosphoserine modification.

In terms of assembly, interacts with CALM1. Phosphorylation at Ser-56 favors interaction with CALM1.

Its subcellular location is the cytoplasm. May act as a competitive inhibitor of calmodulin-dependent enzymes such as calcineurin in neurons. The polypeptide is cAMP-regulated phosphoprotein 21 (ARPP21) (Pongo abelii (Sumatran orangutan)).